Here is a 1359-residue protein sequence, read N- to C-terminus: Tripeptidyl-peptidase 2 (1359 aa).

Positions 45-81 are disordered; the sequence is AASTTTRGGPSPSAGVAPRAMPSSSSSPPSAAEGTTA. The segment covering 64-81 has biased composition (low complexity); it reads AMPSSSSSPPSAAEGTTA. The Peptidase S8 domain occupies 102–600; that stretch reads EIGVDRFLAA…HGLLQVDRAF (499 aa). Catalysis depends on charge relay system residues aspartate 126, histidine 353, and serine 539.

Belongs to the peptidase S8 family.

It catalyses the reaction Release of an N-terminal tripeptide from a polypeptide.. Functionally, serine protease that may function in the proteasome pathway. The chain is Tripeptidyl-peptidase 2 (TPP2) from Oryza sativa subsp. japonica (Rice).